We begin with the raw amino-acid sequence, 57 residues long: uncharacterized protein (57 aa).

The disordered stretch occupies residues 31–57 (HHQTSSFNPMPSEVSLHTSHNFPHTTF). Positions 33–57 (QTSSFNPMPSEVSLHTSHNFPHTTF) are enriched in polar residues.

This is an uncharacterized protein from Invertebrate iridescent virus 6 (IIV-6).